The chain runs to 340 residues: DNA-directed RNA polymerase subunit alpha (340 aa).

Residues 1 to 233 (MYRNWRDLIS…EQLSIFINFD (233 aa)) form an alpha N-terminal domain (alpha-NTD) region. Residues 251–340 (INENLYRSVD…RLRGERKDEE (90 aa)) form an alpha C-terminal domain (alpha-CTD) region.

Belongs to the RNA polymerase alpha chain family. As to quaternary structure, homodimer. The RNAP catalytic core consists of 2 alpha, 1 beta, 1 beta' and 1 omega subunit. When a sigma factor is associated with the core the holoenzyme is formed, which can initiate transcription.

The catalysed reaction is RNA(n) + a ribonucleoside 5'-triphosphate = RNA(n+1) + diphosphate. In terms of biological role, DNA-dependent RNA polymerase catalyzes the transcription of DNA into RNA using the four ribonucleoside triphosphates as substrates. The sequence is that of DNA-directed RNA polymerase subunit alpha from Geobacter sulfurreducens (strain ATCC 51573 / DSM 12127 / PCA).